An 844-amino-acid polypeptide reads, in one-letter code: Eukaryotic translation elongation factor 2 (844 aa).

Residues 17-348 form the tr-type G domain; the sequence is RNIRNMSVIA…MIAIHLPSPV (332 aa). Residue 26-33 participates in GTP binding; sequence AHVDHGKS. Thr57 and Thr59 each carry phosphothreonine. GTP contacts are provided by residues 162-165 and 219-221; these read NKMD and SGL. Position 701 is a diphthamide (His701).

Belongs to the TRAFAC class translation factor GTPase superfamily. Classic translation factor GTPase family. EF-G/EF-2 subfamily. In terms of processing, phosphorylation by EF-2 kinase completely inactivates eEF2.

Its subcellular location is the cytoplasm. It catalyses the reaction GTP + H2O = GDP + phosphate + H(+). Its function is as follows. Catalyzes the GTP-dependent ribosomal translocation step during translation elongation. During this step, the ribosome changes from the pre-translocational (PRE) to the post-translocational (POST) state as the newly formed A-site-bound peptidyl-tRNA and P-site-bound deacylated tRNA move to the P and E sites, respectively. Catalyzes the coordinated movement of the two tRNA molecules, the mRNA and conformational changes in the ribosome. In Drosophila melanogaster (Fruit fly), this protein is Eukaryotic translation elongation factor 2.